A 293-amino-acid chain; its full sequence is Methylsterol monooxygenase 1 (293 aa).

2 helical membrane passes run 55–75 (LIVH…FQFI) and 100–120 (VLLF…YYFT). The region spanning 145–274 (CAVIEDTWHY…FTWWDRIFGT (130 aa)) is the Fatty acid hydroxylase domain. The Histidine box-1 motif lies at 157–161 (HRLLH). The Histidine box-2 signature appears at 170 to 174 (HKIHH). Residues 199 to 219 (FFIGIMLLCDHVILLWAWVTV) traverse the membrane as a helical segment. Positions 249–255 (HHDFHHM) match the Histidine box-3 motif.

Belongs to the sterol desaturase family. Fe cation serves as cofactor. Post-translationally, ubiquitinated by MARCHF6, leading to proteasomal degradation.

Its subcellular location is the endoplasmic reticulum membrane. It catalyses the reaction 4,4-dimethyl-5alpha-cholest-7-en-3beta-ol + 6 Fe(II)-[cytochrome b5] + 3 O2 + 5 H(+) = 4alpha-carboxy-4beta-methyl-5alpha-cholest-7-ene-3beta-ol + 6 Fe(III)-[cytochrome b5] + 4 H2O. The enzyme catalyses 4,4-dimethyl-5alpha-cholesta-8,24-dien-3beta-ol + 6 Fe(II)-[cytochrome b5] + 3 O2 + 5 H(+) = 4beta-methylzymosterol-4alpha-carboxylate + 6 Fe(III)-[cytochrome b5] + 4 H2O. The catalysed reaction is 4alpha-methylzymosterol + 6 Fe(II)-[cytochrome b5] + 3 O2 + 5 H(+) = 4alpha-carboxyzymosterol + 6 Fe(III)-[cytochrome b5] + 4 H2O. It carries out the reaction 4alpha-methyl-5alpha-cholest-7-en-3beta-ol + 6 Fe(II)-[cytochrome b5] + 3 O2 + 5 H(+) = 4alpha-carboxy-5alpha-cholest-7-en-3beta-ol + 6 Fe(III)-[cytochrome b5] + 4 H2O. It catalyses the reaction 4,4-dimethyl-5alpha-cholest-8-en-3beta-ol + 6 Fe(II)-[cytochrome b5] + 3 O2 + 5 H(+) = 4alpha-carboxy-4beta-methyl-5alpha-cholest-8-en-3beta-ol + 6 Fe(III)-[cytochrome b5] + 4 H2O. The enzyme catalyses 4alpha-methyl-5alpha-cholest-8-en-3beta-ol + 6 Fe(II)-[cytochrome b5] + 3 O2 + 5 H(+) = 4alpha-carboxy-5alpha-cholest-8-ene-3beta-ol + 6 Fe(III)-[cytochrome b5] + 4 H2O. It participates in steroid biosynthesis; zymosterol biosynthesis; zymosterol from lanosterol: step 3/6. Its pathway is steroid biosynthesis; cholesterol biosynthesis. In terms of biological role, catalyzes the three-step monooxygenation required for the demethylation of 4,4-dimethyl and 4alpha-methylsterols, which can be subsequently metabolized to cholesterol. This chain is Methylsterol monooxygenase 1 (MSMO1), found in Sus scrofa (Pig).